The primary structure comprises 427 residues: Gamma-glutamyl phosphate reductase (427 aa).

Belongs to the gamma-glutamyl phosphate reductase family.

The protein localises to the cytoplasm. It carries out the reaction L-glutamate 5-semialdehyde + phosphate + NADP(+) = L-glutamyl 5-phosphate + NADPH + H(+). It functions in the pathway amino-acid biosynthesis; L-proline biosynthesis; L-glutamate 5-semialdehyde from L-glutamate: step 2/2. Its function is as follows. Catalyzes the NADPH-dependent reduction of L-glutamate 5-phosphate into L-glutamate 5-semialdehyde and phosphate. The product spontaneously undergoes cyclization to form 1-pyrroline-5-carboxylate. This is Gamma-glutamyl phosphate reductase from Streptomyces griseus subsp. griseus (strain JCM 4626 / CBS 651.72 / NBRC 13350 / KCC S-0626 / ISP 5235).